Consider the following 568-residue polypeptide: 2-succinyl-5-enolpyruvyl-6-hydroxy-3-cyclohexene-1-carboxylate synthase (568 aa).

Belongs to the TPP enzyme family. MenD subfamily. Homodimer. The cofactor is Mg(2+). Requires Mn(2+) as cofactor. It depends on thiamine diphosphate as a cofactor.

It catalyses the reaction isochorismate + 2-oxoglutarate + H(+) = 5-enolpyruvoyl-6-hydroxy-2-succinyl-cyclohex-3-ene-1-carboxylate + CO2. Its pathway is quinol/quinone metabolism; 1,4-dihydroxy-2-naphthoate biosynthesis; 1,4-dihydroxy-2-naphthoate from chorismate: step 2/7. It participates in quinol/quinone metabolism; menaquinone biosynthesis. Catalyzes the thiamine diphosphate-dependent decarboxylation of 2-oxoglutarate and the subsequent addition of the resulting succinic semialdehyde-thiamine pyrophosphate anion to isochorismate to yield 2-succinyl-5-enolpyruvyl-6-hydroxy-3-cyclohexene-1-carboxylate (SEPHCHC). The protein is 2-succinyl-5-enolpyruvyl-6-hydroxy-3-cyclohexene-1-carboxylate synthase of Mannheimia succiniciproducens (strain KCTC 0769BP / MBEL55E).